Reading from the N-terminus, the 246-residue chain is Small ribosomal subunit protein uS2 (246 aa).

The protein belongs to the universal ribosomal protein uS2 family.

The sequence is that of Small ribosomal subunit protein uS2 from Burkholderia vietnamiensis (strain G4 / LMG 22486) (Burkholderia cepacia (strain R1808)).